A 345-amino-acid chain; its full sequence is D-alanine--D-alanine ligase (345 aa).

Residues 133–340 (KLYAKERGVK…IDYRYIHQIQ (208 aa)) enclose the ATP-grasp domain. An ATP-binding site is contributed by 162–211 (PLIVKPLRLGSSIGVSIAKNRQELDYALDVAFEFDEAALLEPFMQGIKEY). The Mg(2+) site is built by Asp284, Glu296, and Asn298.

Belongs to the D-alanine--D-alanine ligase family. Mg(2+) is required as a cofactor. The cofactor is Mn(2+).

It localises to the cytoplasm. It catalyses the reaction 2 D-alanine + ATP = D-alanyl-D-alanine + ADP + phosphate + H(+). It functions in the pathway cell wall biogenesis; peptidoglycan biosynthesis. Functionally, cell wall formation. This chain is D-alanine--D-alanine ligase, found in Wolinella succinogenes (strain ATCC 29543 / DSM 1740 / CCUG 13145 / JCM 31913 / LMG 7466 / NCTC 11488 / FDC 602W) (Vibrio succinogenes).